The following is a 312-amino-acid chain: MILKSKDLLGLKDLTAEEIQYILNTAKTMKVILLSKNKKAPHLQGKSIITLFYENSTRTRLSFELASKYLSANAANISVAASSVAKGETLIDTGKTIDMMGADVIVIRHSMSGAPHLLARNVKASVINAGDGMNEHPTQALLDMFTIIEKKGSLKGLKVAIIGDIYHSRVARSNIWGMTKLGAEVSVAGPSTLMPPELDKTGVKVFTTVQEALIDADVVMGLRIQKERQKSGLFPSLREYSRFFGLDEKRLKLAKEDALILHPGPVNRGVELPSSVIDSERSFINEQVTNGVAVRMALLYLLTRRDSGESVN.

Residues arginine 58 and threonine 59 each contribute to the carbamoyl phosphate site. Residue lysine 86 coordinates L-aspartate. Carbamoyl phosphate contacts are provided by arginine 108, histidine 136, and glutamine 139. Residues arginine 169 and arginine 223 each contribute to the L-aspartate site. Positions 264 and 265 each coordinate carbamoyl phosphate.

It belongs to the aspartate/ornithine carbamoyltransferase superfamily. ATCase family. As to quaternary structure, heterododecamer (2C3:3R2) of six catalytic PyrB chains organized as two trimers (C3), and six regulatory PyrI chains organized as three dimers (R2).

The enzyme catalyses carbamoyl phosphate + L-aspartate = N-carbamoyl-L-aspartate + phosphate + H(+). The protein operates within pyrimidine metabolism; UMP biosynthesis via de novo pathway; (S)-dihydroorotate from bicarbonate: step 2/3. Its function is as follows. Catalyzes the condensation of carbamoyl phosphate and aspartate to form carbamoyl aspartate and inorganic phosphate, the committed step in the de novo pyrimidine nucleotide biosynthesis pathway. This is Aspartate carbamoyltransferase catalytic subunit from Acetivibrio thermocellus (strain ATCC 27405 / DSM 1237 / JCM 9322 / NBRC 103400 / NCIMB 10682 / NRRL B-4536 / VPI 7372) (Clostridium thermocellum).